A 385-amino-acid polypeptide reads, in one-letter code: GTPase Obg (385 aa).

An Obg domain is found at 1–159 (MKFVDEVEIR…RNLKLELLLL (159 aa)). An OBG-type G domain is found at 160 to 333 (ADVGLLGLPN…LIHDVMTLLE (174 aa)). GTP contacts are provided by residues 166–173 (GLPNAGKS), 191–195 (FTTLI), 213–216 (DIPG), 283–286 (NKID), and 314–316 (SAI). Mg(2+) contacts are provided by serine 173 and threonine 193.

This sequence belongs to the TRAFAC class OBG-HflX-like GTPase superfamily. OBG GTPase family. In terms of assembly, monomer. Mg(2+) is required as a cofactor.

The protein resides in the cytoplasm. In terms of biological role, an essential GTPase which binds GTP, GDP and possibly (p)ppGpp with moderate affinity, with high nucleotide exchange rates and a fairly low GTP hydrolysis rate. Plays a role in control of the cell cycle, stress response, ribosome biogenesis and in those bacteria that undergo differentiation, in morphogenesis control. The chain is GTPase Obg from Pseudoalteromonas translucida (strain TAC 125).